A 478-amino-acid polypeptide reads, in one-letter code: RNA exonuclease 3 (478 aa).

One can recognise an Exonuclease domain in the interval 320-465 (VLALDCEMAF…EDAIAAMDVI (146 aa)).

The protein belongs to the REXO1/REXO3 family.

It is found in the cytoplasm. The protein resides in the nucleus. 3' to 5' exoribonuclease required for proper 3' end maturation of MRP RNA and of the U5L snRNA. This is RNA exonuclease 3 (REX3) from Kluyveromyces lactis (strain ATCC 8585 / CBS 2359 / DSM 70799 / NBRC 1267 / NRRL Y-1140 / WM37) (Yeast).